A 709-amino-acid polypeptide reads, in one-letter code: G1/S-specific cyclin-E (709 aa).

Disordered regions lie at residues 1–30 (MGLNAKSVCSTSSTEPNGSIVTTAPSNGEV), 43–149 (ISSS…NLSS), 162–205 (VDGQ…GSKQ), 221–289 (TVVT…PKHQ), and 642–709 (ALRA…RSNP). 3 stretches are compositionally biased toward polar residues: residues 7 to 29 (SVCSTSSTEPNGSIVTTAPSNGE), 61 to 70 (PSTSFSSASQ), and 91 to 106 (CDSQNLAASTAATSNG). Serine 114, serine 115, serine 117, and serine 129 each carry phosphoserine. Positions 162 to 175 (VDGQSTQELLSIRS) are enriched in polar residues. Serine 187, serine 192, serine 195, and serine 198 each carry phosphoserine. Pro residues predominate over residues 187 to 199 (SPLPDSPDSPPSP). A compositionally biased stretch (acidic residues) spans 228–258 (EDDDLLDDSCEDYSYDEDDEDDVEEEDDDVE). Over residues 260 to 277 (YSSTISPASSGCSQQQAV) the composition is skewed to polar residues. Phosphothreonine is present on threonine 651. Over residues 677-709 (SSTTTCCNTAASNKGGKSSSNNSVTSCSSRSNP) the composition is skewed to low complexity.

The protein belongs to the cyclin family. Cyclin E subfamily. Interacts with a member of the CDK2/CDK protein kinases to form a serine/threonine kinase holoenzyme complex. The cyclin subunit imparts substrate specificity to the complex. Interacts (via C-terminus) with Z600 (via C-terminus). In terms of tissue distribution, isoform II is ubiquitous in early embryos and, prior to mitosis 14, is rapidly degraded in all cells except the pole (germ) cells. Expressed during G1 phase in proliferating peripheral nervous system cells. Constitutive expression in embryonic cycles lacking a G1 phase.

The protein resides in the nucleus. Its function is as follows. Essential for the control of the cell cycle at the G1/S (start) transition. Targeted by archipelago for degradation by the SFC ubiquitin ligase complex. The polypeptide is G1/S-specific cyclin-E (CycE) (Drosophila melanogaster (Fruit fly)).